The primary structure comprises 380 residues: Cytochrome b (380 aa).

A run of 4 helical transmembrane segments spans residues 34-54 (FGSL…LLAT), 78-99 (WLIR…YLHI), 114-134 (WNTG…GYVL), and 179-199 (FFAL…IHLT). Heme b contacts are provided by His84 and His98. 2 residues coordinate heme b: His183 and His197. Position 202 (His202) interacts with a ubiquinone. 4 helical membrane-spanning segments follow: residues 227–247 (LKDI…ALFS), 289–309 (LGGV…PLLH), 321–341 (LSQL…WVGS), and 348–368 (FIII…LLFP).

The protein belongs to the cytochrome b family. The cytochrome bc1 complex contains 11 subunits: 3 respiratory subunits (MT-CYB, CYC1 and UQCRFS1), 2 core proteins (UQCRC1 and UQCRC2) and 6 low-molecular weight proteins (UQCRH/QCR6, UQCRB/QCR7, UQCRQ/QCR8, UQCR10/QCR9, UQCR11/QCR10 and a cleavage product of UQCRFS1). This cytochrome bc1 complex then forms a dimer. It depends on heme b as a cofactor.

The protein localises to the mitochondrion inner membrane. Its function is as follows. Component of the ubiquinol-cytochrome c reductase complex (complex III or cytochrome b-c1 complex) that is part of the mitochondrial respiratory chain. The b-c1 complex mediates electron transfer from ubiquinol to cytochrome c. Contributes to the generation of a proton gradient across the mitochondrial membrane that is then used for ATP synthesis. The polypeptide is Cytochrome b (MT-CYB) (Cepphus grylle (Black guillemot)).